The chain runs to 227 residues: Germin-like protein 3-5 (227 aa).

The signal sequence occupies residues 1–29 (MEYGFKAAGLVFVVLLLQQAPVLIRATDA). Residues Cys-36 and Cys-51 are joined by a disulfide bond. A Cupin type-1 domain is found at 65–217 (SKIATGGDVN…ALRVDAGVVE (153 aa)). Residues Asn-78 and Asn-81 are each glycosylated (N-linked (GlcNAc...) asparagine). The Mn(2+) site is built by His-114, His-116, Glu-121, and His-163.

The protein belongs to the germin family. As to quaternary structure, oligomer (believed to be a pentamer but probably hexamer).

The protein resides in the secreted. The protein localises to the extracellular space. It localises to the apoplast. In terms of biological role, may play a role in plant defense. Probably has no oxalate oxidase activity even if the active site is conserved. This chain is Germin-like protein 3-5, found in Oryza sativa subsp. japonica (Rice).